Consider the following 883-residue polypeptide: Valine--tRNA ligase (883 aa).

Positions 51–61 (PNVTGKLHLGH) match the 'HIGH' region motif. The 'KMSKS' region motif lies at 527–531 (KMSKS). ATP is bound at residue Lys530. A coiled-coil region spans residues 811-847 (LEALIDLNVEIARLEKELEKWNKEVARVQGKLNNERF).

Belongs to the class-I aminoacyl-tRNA synthetase family. ValS type 1 subfamily. As to quaternary structure, monomer.

The protein resides in the cytoplasm. The catalysed reaction is tRNA(Val) + L-valine + ATP = L-valyl-tRNA(Val) + AMP + diphosphate. Catalyzes the attachment of valine to tRNA(Val). As ValRS can inadvertently accommodate and process structurally similar amino acids such as threonine, to avoid such errors, it has a 'posttransfer' editing activity that hydrolyzes mischarged Thr-tRNA(Val) in a tRNA-dependent manner. The polypeptide is Valine--tRNA ligase (Listeria monocytogenes serovar 1/2a (strain ATCC BAA-679 / EGD-e)).